The following is a 577-amino-acid chain: Polyadenylate-binding protein, cytoplasmic and nuclear (577 aa).

Residues 1-10 (MADITDKTAE) show a composition bias toward basic and acidic residues. The tract at residues 1-36 (MADITDKTAEQLENLNIQDDQKQAATGSESQSVENS) is disordered. Alanine 2 carries the N-acetylalanine modification. Lysine 7 participates in a covalent cross-link: Glycyl lysine isopeptide (Lys-Gly) (interchain with G-Cter in ubiquitin). Residues 9 to 61 (AEQLENLNIQDDQKQAATGSESQSVENSSASLYVGDLEPSVSEAHLYDIFSPI) form a required and sufficient for nuclear export region. Positions 11-27 (QLENLNIQDDQKQAATG) are enriched in polar residues. The Nuclear export signal motif lies at 12-17 (LENLNI). RRM domains are found at residues 38-116 (ASLY…WSQR), 126-203 (GNIF…PHLS), 219-296 (TNLY…RAQK), and 322-399 (VNLF…IAQR). Arginine 107 is subject to Omega-N-methylarginine. Serine 249 carries the phosphoserine modification. Positions 281–317 (DSELNGEKLYVGRAQKKNERMHVLKKQYEAYRLEKMA) are required and sufficient for nuclear import. Serine 332 carries the phosphoserine modification. Lysine 337 is covalently cross-linked (Glycyl lysine isopeptide (Lys-Gly) (interchain with G-Cter in ubiquitin)). Serine 405 carries the phosphoserine modification. Residues 473–577 (PPQFRNGPVY…KEQEQQTEQA (105 aa)) are interaction with SUP35. The PABC domain maps to 489 to 568 (GFPRNANDNN…ASAAYESFKK (80 aa)).

Belongs to the polyadenylate-binding protein type-1 family. As to quaternary structure, binds to poly(A) mRNA to form a periodic structure with a packing density of one molecule per 25 adenylate residues. Interacts with the nuclear export factor CRM1 and with the importin SXM1. Interacts with RNA15, a component of the cleavage factor IA (CFIA) complex. Interacts with translation initiation factor eIF4G (TIF4631 or TIF4632) and release factor eRF3 (SUP35). Interacts with the PAB-dependent poly(A)-nuclease (PAN) complex regulatory subunit PAN3. Interacts with ARF1, DCP1, PBP1, the Hsp70 chaperone SSA1, and TPA1. Interacts with PAT1 in an RNA-dependent manner.

The protein localises to the cytoplasm. It is found in the nucleus. Functionally, binds the poly(A) tail of mRNA. Appears to be an important mediator of the multiple roles of the poly(A) tail in mRNA biogenesis, stability and translation. In the nucleus, interacts with the nuclear cleavage factor IA (CFIA), which is required for both mRNA cleavage and polyadenylation. Is also required for efficient mRNA export to the cytoplasm. Acts in concert with a poly(A)-specific nuclease (PAN) to affect poly(A) tail shortening, which may occur concomitantly with either nucleocytoplasmic mRNA transport or translational initiation. Regulates PAN activity via interaction with the stimulator PAN3 or the inhibitor PBP1. In the cytoplasm, affects both translation and mRNA decay. Stimulates translation by interaction with translation initiation factor eIF4G, a subunit of the cap-binding complex eIF4F, bringing the 5'- and 3'-ends of the mRNA in proximity. The formation of this circular mRNP structure appears to be critical for the synergistic effects of the cap and the poly(A) tail in facilitating translation initiation, recycling of ribosomes, and mRNA stability. Also regulates translation termination by recruiting eukaryotic release factor 3 (eRF3). Interaction with eRF3 is also required for regulation of normal mRNA decay through translation termination-coupled poly(A) shortening, probably mediated by PAN. Loss of PAB1 from the mRNP after deadenylation triggers mRNA degradation. Inhibits the major cytoplasmic mRNA deadenylase CCR4-NOT complex. Is also associated peripherally with COPI vesicles through its interaction with ARF1, and this is required for correct localization of the asymmetrically distributed ASH1 mRNA. This is Polyadenylate-binding protein, cytoplasmic and nuclear (PAB1) from Saccharomyces cerevisiae (strain ATCC 204508 / S288c) (Baker's yeast).